The chain runs to 545 residues: G-protein coupled receptor 161 (545 aa).

Residues 1–46 lie on the Extracellular side of the membrane; that stretch reads MDFVQHALLTASRGALTMSLNSSLSYRKELSNLTATEGGEGGAVSE. 2 N-linked (GlcNAc...) asparagine glycosylation sites follow: N21 and N32. The chain crosses the membrane as a helical span at residues 47 to 67; it reads FIAIIIITVLVCLGNLVIVVT. The Cytoplasmic portion of the chain corresponds to 68-80; it reads LYKKSYLLTLSNK. Residues 81 to 101 traverse the membrane as a helical segment; it reads FVFSLTLSNFLLSVLVLPFVV. At 102–117 the chain is on the extracellular side; that stretch reads TSSIRREWIFGVVWCN. The cysteines at positions 116 and 194 are disulfide-linked. N117 carries N-linked (GlcNAc...) asparagine glycosylation. The helical transmembrane segment at 118-139 threads the bilayer; that stretch reads FSALLYLLISSASMLTLGVIAI. The Cytoplasmic segment spans residues 140-159; the sequence is DRYYAVLYPMVYPMKITGNR. A helical transmembrane segment spans residues 160–180; it reads AVMALVYIWLHSLIGCLPPLF. At 181–205 the chain is on the extracellular side; the sequence is GWSSVEFDEFKWMCVAAWHQEPGYT. Residues 206 to 226 form a helical membrane-spanning segment; it reads IFWQIWCALFPFLIMLVCYGF. At 227-285 the chain is on the cytoplasmic side; that stretch reads IFRVARVKARKVHCGTVVTVEEDSQRSGRKNSSTSTSSSGSRRNALQGVVYSANQCKAL. The chain crosses the membrane as a helical span at residues 286-306; sequence ITILVVIGAFMVTWGPYMVVI. The Extracellular segment spans residues 307–322; sequence TSEALWGKNCVSPTLE. A helical membrane pass occupies residues 323 to 343; the sequence is TWATWLSFTSAICHPLIYGLW. At 344-545 the chain is on the cytoplasmic side; it reads NKTVRKELLG…EGNVLAAEQR (202 aa).

It belongs to the G-protein coupled receptor 1 family.

The protein localises to the cell projection. The protein resides in the cilium membrane. It localises to the cell membrane. In terms of biological role, key negative regulator of Shh signaling, which promotes the processing of GLI3 into GLI3R during neural tube development. Recruited by TULP3 and the IFT-A complex to primary cilia and acts as a regulator of the PKA-dependent basal repression machinery in Shh signaling by increasing cAMP levels, leading to promote the PKA-dependent processing of GLI3 into GLI3R and repress the Shh signaling. In presence of SHH, it is removed from primary cilia and is internalized into recycling endosomes, preventing its activity and allowing activation of the Shh signaling. Its ligand is unknown. This is G-protein coupled receptor 161 (Gpr161) from Mus musculus (Mouse).